Consider the following 685-residue polypeptide: MPAYLLLLACNVLLVLGAHVQRELVLTWEEGAPNGQSRQMIKTNGQFPSPTLIFDEGDDVEIVVRNYMHENTTIHWHGILMQDTPWSDGVPGLSQKPIEPGESYVYRFTAYPPGQYWYHSHSRATLLDGLYGALFIRRKPGTAGPWAMISEDPEDIAAMERASNNPHIMMLSDWDYYNSTQYKEADANSRLQIFCVDSILLNGKGSVYCPGHQWLIDKQIPFMHKSWPNDTITDKGCFPFVPSTEGPWLADGNVSAIPPGLQEGCVPYSGPTEAIEVDPADRWASVNWIGGSTFKTLQPTIDEHEMWIYEVDGHYIEPRRADTFLIWAGERYSAMIRLDKKPMDYSIRVPDGGYSQMIAAFGILRYKNGDPNARQKPDRFGVTTISKPYFDYNAWPMRDAVFLDKLDLPPWPRKVPAAHGDDMHVLYLGKANSTWEFTLSGKKKYPPDRSAYEPLLYNVNSEQAHDDDLIIRTQNGTWQDIVLQVGHSPLWPVDFPHAVHKHANKYWRIGGGQGLWNYSSVEEAMADQPESFNMVNPPYRDTFLTEFTGAMWVVLRYQVTSPGAWLLHCHFEMHLDNGMAMAILDGVDKWPHVPPEYTQGFHGFREHELPGPAGFWGLVSKILRPESLVWAGGAAVVLLSLFIGGLWRLWQRRMQGTYYVLSQEDERDRFSMDKEAWKSEETKRM.

Positions 1–17 (MPAYLLLLACNVLLVLG) are cleaved as a signal peptide. Plastocyanin-like domains are found at residues 26–139 (LTWE…IRRK) and 168–368 (IMML…RYKN). N-linked (GlcNAc...) asparagine glycosylation occurs at asparagine 71. Residues histidine 75, histidine 77, histidine 119, and histidine 121 each coordinate Cu cation. 5 N-linked (GlcNAc...) asparagine glycosylation sites follow: asparagine 178, asparagine 229, asparagine 253, asparagine 432, and asparagine 475. Residues 466–585 (DDDLIIRTQN…DNGMAMAILD (120 aa)) form the Plastocyanin-like 3 domain. Residue histidine 500 coordinates Cu cation. An N-linked (GlcNAc...) asparagine glycan is attached at asparagine 517. The helical transmembrane segment at 627–647 (SLVWAGGAAVVLLSLFIGGLW) threads the bilayer.

This sequence belongs to the multicopper oxidase family.

It localises to the membrane. It catalyses the reaction 4 semiviriditoxin + O2 = 2 (M)-viriditoxin + 2 H2O. It functions in the pathway secondary metabolite biosynthesis. Functionally, multicopper oxidase; part of the gene cluster that mediates the biosynthesis of viriditoxin, one of the 'classical' secondary metabolites produced by fungi and that has antibacterial activity. The first step is performed by the polyketide synthase VdtA which condenses one acetyl-CoA and 6 malonyl-CoA units to form the heptaketide monomer backbone of viriditoxin. The product of VdtA is then O-methylated on C7 by the O-methyltransferase VdtC. The O-methyl group is important for the stereoselective coupling of the monomers at the final step of viriditoxin biosynthesis. The short-chain dehydrogenase/reductase VdtF then acts as a stereospecific reductase converting the pyrone to dihydropyrone via the reduction of the C3-C4 double bond. The FAD-binding monooxygenase VdtE then converts the ketone group into a methyl-ester group to yield semi-viriditoxin. Finally, the laccase VdtB is involved in dimerization of 2 semi-viriditoxin molecules to yield the final viriditoxin. VdtB is responsible for the regioselective 6,6'-coupling of semi-viriditoxin, which yields (M)-viriditoxin and (P)-viriditoxin at a ratio of 1:2. The non-catalytic carboxylesterase-like protein VdtD affects the stereochemistical outcome of the coupling. The highly reducing polyketide synthase VdtX is not involved in viriditoxin synthesis, but might possibly play a role in the production of additional metabolites not identified yet. This is Multicopper oxidase VdtB from Byssochlamys spectabilis (Paecilomyces variotii).